The primary structure comprises 199 residues: Charged multivesicular body protein 1b (199 aa).

Coiled-coil stretches lie at residues 15 to 42 and 178 to 199; these read AKEL…AIQK and TSVA…RDQV. A disordered region spans residues 167–199; sequence ELPQGQTGSVGTSVASTEQDELSQRLARLRDQV. Polar residues predominate over residues 170 to 183; it reads QGQTGSVGTSVAST. Positions 186-196 match the MIT-interacting motif motif; it reads DELSQRLARLR.

The protein belongs to the SNF7 family.

It is found in the cytoplasm. The protein localises to the cytosol. It localises to the endosome. The protein resides in the late endosome membrane. Its function is as follows. Probable peripherally associated component of the endosomal sorting required for transport complex III (ESCRT-III) which is involved in multivesicular bodies (MVBs) formation and sorting of endosomal cargo proteins into MVBs. MVBs contain intraluminal vesicles (ILVs) that are generated by invagination and scission from the limiting membrane of the endosome and mostly are delivered to lysosomes enabling degradation of membrane proteins, such as stimulated growth factor receptors, lysosomal enzymes and lipids. The protein is Charged multivesicular body protein 1b (chmp1b) of Xenopus tropicalis (Western clawed frog).